A 937-amino-acid chain; its full sequence is Protocadherin alpha-7 (937 aa).

An N-terminal signal peptide occupies residues 1–29 (MVNLRGYNWKSQQLLLFLIIVAAWEAGSG). Topologically, residues 30–697 (QLHYSVPEEA…RVDQRLVDVN (668 aa)) are extracellular. Cadherin domains lie at 34–133 (SVPE…PPMF), 157–242 (ASDA…APVF), 243–350 (DRSL…APQL), 351–455 (TVSS…APLF), 456–565 (AQPE…APTL), and 587–682 (PGQV…SSKV). A disulfide bridge connects residues Cys96 and Cys102. O-linked (Man) threonine glycosylation is found at Thr223 and Thr225. Residues Asn257 and Asn265 are each glycosylated (N-linked (GlcNAc...) asparagine). Thr438 carries O-linked (Man) threonine glycosylation. O-linked (Man) serine glycosylation is present at Ser478. Asn548 is a glycosylation site (N-linked (GlcNAc...) asparagine). The chain crosses the membrane as a helical span at residues 698–718 (VYLIIAICAVSSLLVLTLLLY). The Cytoplasmic segment spans residues 719 to 937 (TALRCSATPT…GNSTTDNSDQ (219 aa)). Disordered stretches follow at residues 755-794 (RQRVCSGEGPPKTDLMAFSPSLPQGPSSTDNPRQPNPDWR) and 816-843 (RAGPGGPDQQWPTVSSATPEPEAGEVSP). PXXP repeat units lie at residues 774–777 (PSLP), 786–789 (PRQP), 819–822 (PGGP), 860–863 (PGNP), and 878–881 (PGSP). The segment at 774–881 (PSLPQGPSST…PDKFIIPGSP (108 aa)) is 5 X 4 AA repeats of P-X-X-P. Over residues 775–787 (SLPQGPSSTDNPR) the composition is skewed to polar residues. Positions 887–937 (RQEPANNQIDKSDFITFGKKEETKKKKKKKKGNKTQEKKEKGNSTTDNSDQ) are disordered. The segment covering 896–910 (DKSDFITFGKKEETK) has biased composition (basic and acidic residues).

In terms of assembly, forms homodimers in trans (molecules expressed by two different cells). Forms promiscuous heterodimers in cis (at the plasma membrane of the same cell) with other protocadherins.

The protein resides in the cell membrane. Functionally, calcium-dependent cell-adhesion protein involved in cells self-recognition and non-self discrimination. Thereby, it is involved in the establishment and maintenance of specific neuronal connections in the brain. The chain is Protocadherin alpha-7 from Mus musculus (Mouse).